The sequence spans 231 residues: SrfA-induced gene F protein (231 aa).

The sequence is that of SrfA-induced gene F protein (sigF) from Dictyostelium discoideum (Social amoeba).